Here is a 150-residue protein sequence, read N- to C-terminus: UPF0756 membrane protein PC1_1142 (150 aa).

4 helical membrane-spanning segments follow: residues 1 to 21 (MAYL…GIIS), 51 to 71 (YGLS…IASG), 82 to 102 (FLHW…WLGG), and 127 to 147 (ALFR…SLLI).

It belongs to the UPF0756 family.

Its subcellular location is the cell membrane. This chain is UPF0756 membrane protein PC1_1142, found in Pectobacterium carotovorum subsp. carotovorum (strain PC1).